The sequence spans 481 residues: UDP-N-acetylmuramoyl-L-alanyl-D-glutamate--L-lysine ligase (481 aa).

Serine 42 serves as a coordination point for UDP-N-acetyl-alpha-D-muramoyl-L-alanyl-D-glutamate. 118 to 124 provides a ligand contact to ATP; the sequence is GTKGKTT. Residues glutamine 158, 160–161, serine 187, and arginine 195 each bind UDP-N-acetyl-alpha-D-muramoyl-L-alanyl-D-glutamate; that span reads TT. At lysine 229 the chain carries N6-carboxylysine. Residues 404–407 carry the L-lysine recognition motif motif; it reads DDPN.

This sequence belongs to the MurCDEF family. MurE subfamily. Post-translationally, carboxylation is probably crucial for Mg(2+) binding and, consequently, for the gamma-phosphate positioning of ATP.

Its subcellular location is the cytoplasm. The catalysed reaction is UDP-N-acetyl-alpha-D-muramoyl-L-alanyl-D-glutamate + L-lysine + ATP = UDP-N-acetyl-alpha-D-muramoyl-L-alanyl-gamma-D-glutamyl-L-lysine + ADP + phosphate + H(+). It functions in the pathway cell wall biogenesis; peptidoglycan biosynthesis. In terms of biological role, catalyzes the addition of L-lysine to the nucleotide precursor UDP-N-acetylmuramoyl-L-alanyl-D-glutamate (UMAG) in the biosynthesis of bacterial cell-wall peptidoglycan. The sequence is that of UDP-N-acetylmuramoyl-L-alanyl-D-glutamate--L-lysine ligase from Streptococcus pyogenes serotype M18 (strain MGAS8232).